A 388-amino-acid polypeptide reads, in one-letter code: MRYLTAGESHGPRLTAIIEGVPAGLPLTADYINAELKRRQGGYGRGARMKIESDQVEITSGVRHGLTMGGPITLNVTNLDHQKWQEIMSAADVDEKKKGLRKITKPRPGHADLVGGMKYRFDDLRNSLERSSARETTMRVAVGAVAKRLLEEIGVEVASHIVTFGGIDINVPNNLTVGEIKERAAQSEVSIVNPDREEEIKAYIDQIKKDGDTIGGVIETVVGGVPVGLGSYVQWDKKLDAKIAQGVVSINAFKGVEFGVGFEAGRLKGSQVMDEILWSEEDGFTRRTNNLGGFEGGMTNGQPIVVRGVMKPIPTLYKPLMSVDIETHEPYKATVERSDPTALPAAGVVMESVVATVLATEVLEKFSSDNLEELKDAVARHREFVKNF.

The NADP(+) site is built by arginine 39 and arginine 45. Residues 130–132, 251–252, glycine 296, 311–315, and arginine 337 each bind FMN; these read RSS, NA, and KPIPT.

This sequence belongs to the chorismate synthase family. As to quaternary structure, homotetramer. The cofactor is FMNH2.

It catalyses the reaction 5-O-(1-carboxyvinyl)-3-phosphoshikimate = chorismate + phosphate. The protein operates within metabolic intermediate biosynthesis; chorismate biosynthesis; chorismate from D-erythrose 4-phosphate and phosphoenolpyruvate: step 7/7. In terms of biological role, catalyzes the anti-1,4-elimination of the C-3 phosphate and the C-6 proR hydrogen from 5-enolpyruvylshikimate-3-phosphate (EPSP) to yield chorismate, which is the branch point compound that serves as the starting substrate for the three terminal pathways of aromatic amino acid biosynthesis. This reaction introduces a second double bond into the aromatic ring system. The sequence is that of Chorismate synthase from Streptococcus sanguinis (strain SK36).